The following is a 482-amino-acid chain: tRNA sulfurtransferase (482 aa).

The THUMP domain maps to 58-160 (VEALQELSRV…GNKAYLYSNV (103 aa)). Residues 178–179 (LF), 203–204 (HY), arginine 260, glycine 282, and glutamine 291 contribute to the ATP site. The cysteines at positions 341 and 444 are disulfide-linked. The region spanning 400-482 (IPGDSIIIDV…RYRAGLEKTR (83 aa)) is the Rhodanese domain. Residue cysteine 444 is the Cysteine persulfide intermediate of the active site.

This sequence belongs to the ThiI family.

The protein localises to the cytoplasm. It carries out the reaction [ThiI sulfur-carrier protein]-S-sulfanyl-L-cysteine + a uridine in tRNA + 2 reduced [2Fe-2S]-[ferredoxin] + ATP + H(+) = [ThiI sulfur-carrier protein]-L-cysteine + a 4-thiouridine in tRNA + 2 oxidized [2Fe-2S]-[ferredoxin] + AMP + diphosphate. The catalysed reaction is [ThiS sulfur-carrier protein]-C-terminal Gly-Gly-AMP + S-sulfanyl-L-cysteinyl-[cysteine desulfurase] + AH2 = [ThiS sulfur-carrier protein]-C-terminal-Gly-aminoethanethioate + L-cysteinyl-[cysteine desulfurase] + A + AMP + 2 H(+). Its pathway is cofactor biosynthesis; thiamine diphosphate biosynthesis. Functionally, catalyzes the ATP-dependent transfer of a sulfur to tRNA to produce 4-thiouridine in position 8 of tRNAs, which functions as a near-UV photosensor. Also catalyzes the transfer of sulfur to the sulfur carrier protein ThiS, forming ThiS-thiocarboxylate. This is a step in the synthesis of thiazole, in the thiamine biosynthesis pathway. The sulfur is donated as persulfide by IscS. The protein is tRNA sulfurtransferase of Desulfurococcus amylolyticus (strain DSM 18924 / JCM 16383 / VKM B-2413 / 1221n) (Desulfurococcus kamchatkensis).